Consider the following 128-residue polypeptide: MAYRKLGRTSSQRKAMLRDLTTDLLINESIVTTEARAKEIRKTVEKMITLGKRGDLHARRQAAAFVRNEIASENYDEATDKYTSTTALQKLFSEIAPRYAERNGGYTRILKTEPRRGDAAPMAIIELV.

The protein belongs to the bacterial ribosomal protein bL17 family. As to quaternary structure, part of the 50S ribosomal subunit. Contacts protein L32.

The chain is Large ribosomal subunit protein bL17 from Streptococcus pneumoniae serotype 2 (strain D39 / NCTC 7466).